The following is a 557-amino-acid chain: Dihydroxy-acid dehydratase (557 aa).

Residue Asp-78 participates in Mg(2+) binding. Cys-119 contacts [2Fe-2S] cluster. The Mg(2+) site is built by Asp-120 and Lys-121. Position 121 is an N6-carboxylysine (Lys-121). Cys-192 contacts [2Fe-2S] cluster. Position 442 (Glu-442) interacts with Mg(2+). Ser-468 serves as the catalytic Proton acceptor.

This sequence belongs to the IlvD/Edd family. As to quaternary structure, homodimer. It depends on [2Fe-2S] cluster as a cofactor. Requires Mg(2+) as cofactor.

The enzyme catalyses (2R)-2,3-dihydroxy-3-methylbutanoate = 3-methyl-2-oxobutanoate + H2O. It carries out the reaction (2R,3R)-2,3-dihydroxy-3-methylpentanoate = (S)-3-methyl-2-oxopentanoate + H2O. It functions in the pathway amino-acid biosynthesis; L-isoleucine biosynthesis; L-isoleucine from 2-oxobutanoate: step 3/4. The protein operates within amino-acid biosynthesis; L-valine biosynthesis; L-valine from pyruvate: step 3/4. In terms of biological role, functions in the biosynthesis of branched-chain amino acids. Catalyzes the dehydration of (2R,3R)-2,3-dihydroxy-3-methylpentanoate (2,3-dihydroxy-3-methylvalerate) into 2-oxo-3-methylpentanoate (2-oxo-3-methylvalerate) and of (2R)-2,3-dihydroxy-3-methylbutanoate (2,3-dihydroxyisovalerate) into 2-oxo-3-methylbutanoate (2-oxoisovalerate), the penultimate precursor to L-isoleucine and L-valine, respectively. The protein is Dihydroxy-acid dehydratase of Bacillus cereus (strain AH820).